A 435-amino-acid chain; its full sequence is Fez family zinc finger protein 2 (435 aa).

Positions 27–42 (SLAFSIERIMAKTSEP) match the Engrailed homology 1 repressor motif. 6 C2H2-type zinc fingers span residues 254–276 (FTCE…MPVH), 282–304 (FVCK…KIIH), 310–332 (HKCN…IRIH), 338–360 (FVCE…KLTH), 366–388 (YKCT…MHTH), and 394–417 (FTCG…RKLH).

It belongs to the krueppel C2H2-type zinc-finger protein family.

It is found in the nucleus. Its function is as follows. Transcription repressor. Component of the regulatory cascade that controls the development of dopaminergic (DA) and serotonergic (5HT) neurons. This chain is Fez family zinc finger protein 2 (fezf2), found in Xenopus tropicalis (Western clawed frog).